The primary structure comprises 488 residues: Probable apyrase 5 (488 aa).

A disordered region spans residues 1-26 (MDALKVQILPDNQSSPSSTHMLTKPK). Topologically, residues 1–32 (MDALKVQILPDNQSSPSSTHMLTKPKSKKATK) are cytoplasmic. Over residues 10–21 (PDNQSSPSSTHM) the composition is skewed to polar residues. A helical; Signal-anchor for type II membrane protein transmembrane segment spans residues 33 to 53 (SIAMLIVASLAITLGLLFVFS). The Extracellular portion of the chain corresponds to 54-488 (SNSVMFSASF…GKSRKMIGFK (435 aa)). ATP is bound at residue 73–83 (VIIDAGSSGTR). E196 (proton acceptor) is an active-site residue. 220 to 230 (GIVELGGASAQ) is an ATP binding site. N-linked (GlcNAc...) asparagine glycosylation is present at N251.

The protein belongs to the GDA1/CD39 NTPase family. Ca(2+) serves as cofactor. As to expression, highly expressed in young rosette leaves but only weakly in roots.

It is found in the membrane. It carries out the reaction a ribonucleoside 5'-triphosphate + 2 H2O = a ribonucleoside 5'-phosphate + 2 phosphate + 2 H(+). Its function is as follows. Catalyzes the hydrolysis of phosphoanhydride bonds of nucleoside tri- and di-phosphates. The sequence is that of Probable apyrase 5 (APY5) from Arabidopsis thaliana (Mouse-ear cress).